A 488-amino-acid chain; its full sequence is Ribosomal RNA small subunit methyltransferase F (488 aa).

Residues 135 to 141, glutamate 159, aspartate 186, and aspartate 204 contribute to the S-adenosyl-L-methionine site; that span reads ASAPGSK. Cysteine 257 acts as the Nucleophile in catalysis.

This sequence belongs to the class I-like SAM-binding methyltransferase superfamily. RsmB/NOP family.

The protein resides in the cytoplasm. The enzyme catalyses cytidine(1407) in 16S rRNA + S-adenosyl-L-methionine = 5-methylcytidine(1407) in 16S rRNA + S-adenosyl-L-homocysteine + H(+). Its function is as follows. Specifically methylates the cytosine at position 1407 (m5C1407) of 16S rRNA. This chain is Ribosomal RNA small subunit methyltransferase F, found in Shewanella pealeana (strain ATCC 700345 / ANG-SQ1).